Here is a 744-residue protein sequence, read N- to C-terminus: FNIP repeat-containing protein cigB (744 aa).

FNIP repeat units follow at residues 340 to 376 (FNQKLTKGIIPEGVKVLYIGDIKQELIIDSIPNTVTT), 383 to 422 (FNQKLTKGIIPEGVKELRLGDIKQELIIDSIPSTLTTVIL), 426 to 462 (FNQKLTKGIIPEGVKVLYIGDIKQELIIDSIPNTVTR), 469 to 508 (FNQKLTKGIIPESVKELHIGNIKQELIIDSIPNTVTTITL), 512 to 550 (FNQKLTKGIIPEGVKELYIGNLKQELIIDSIPNTVTTVR), 555 to 594 (FNQKLTKGIIPEGVKELYIRDIKQELIIDSIPNTVTTVIL), 598 to 635 (FNQKLTKGIIPEWVKGLCLGDIKQELIIDSIPNTVTTV), 641 to 678 (FNQKLTKGIIPESVKELYIDDIKQELIIDSIPNTVTTV), and 684 to 723 (FNQKLTKGIIPEWVKELHIGDIKQELIIDSIPNTLNNVYI).

In Dictyostelium discoideum (Social amoeba), this protein is FNIP repeat-containing protein cigB (cigB).